The sequence spans 1276 residues: Sterol regulatory element-binding protein cleavage-activating protein (1276 aa).

Residues 1-18 (MTLTERLREKISQAFYNH) lie on the Cytoplasmic side of the membrane. Residues 19–39 (GLLCASYPIPIILFTGLCILA) form a helical membrane-spanning segment. The Lumenal segment spans residues 40 to 279 (CCYPLLKLPL…NLVHVHFKEE (240 aa)). Residues 46 to 284 (KLPLPGTGPV…HFKEEIGIAE (239 aa)) form a loop-1 region. A disordered region spans residues 60 to 81 (PVKDYSPPPVDSDHKQGEPSEQ). An N-linked (GlcNAc...) asparagine glycan is attached at N263. The chain crosses the membrane as a helical span at residues 280-300 (IGIAELIPLVTTYIILFAYIY). An SSD domain is found at 284-442 (ELIPLVTTYI…MFFFTTVLSI (159 aa)). The Cytoplasmic portion of the chain corresponds to 301–312 (FSTRKIDMVKSK). The helical transmembrane segment at 313–333 (WGLALAAVVTVLSSLLMSVGL) threads the bilayer. Residues 334-344 (CTLFGLTPTLN) are Lumenal-facing. The helical transmembrane segment at 345–365 (GGEIFPYLVVVIGLENVLVLT) threads the bilayer. At 366-401 (KSVVSTPVDLEVKLRIAQGLSSESWSIMKNVATELG) the chain is on the cytoplasmic side. Residues 402–422 (IILIGYFTLVPAIQEFCLFAV) form a helical membrane-spanning segment. Residue V423 is a topological domain, lumenal. A helical transmembrane segment spans residues 424–444 (GLVSDFFLQMFFFTTVLSIDI). At 445–518 (RRMELADLNK…FLARTRLAQR (74 aa)) the chain is on the cytoplasmic side. The ER export signal signature appears at 447–452 (MELADL). Residues K454 and K466 each participate in a glycyl lysine isopeptide (Lys-Gly) (interchain with G-Cter in ubiquitin) cross-link. The helical transmembrane segment at 519-539 (LIMAGTVVWIGILVYTDPAGL) threads the bilayer. The loop-7 stretch occupies residues 535-710 (DPAGLRTYLA…QAHGDITLYK (176 aa)). Over 540–708 (RTYLAAQVTE…GTQAHGDITL (169 aa)) the chain is Lumenal. 2 N-linked (GlcNAc...) asparagine glycosylation sites follow: N590 and N641. A helical transmembrane segment spans residues 709 to 729 (YKVAALGLAAGIVLVLLLLCL). Topologically, residues 730–1276 (YRVLCPRNYG…YVPSVLEKLD (547 aa)) are cytoplasmic. The interval 731–1276 (RVLCPRNYGQ…YVPSVLEKLD (546 aa)) is interaction with SREBF2. One copy of the WD 1 repeat lies at 771-811 (VLRGHLMDIECLASDGMLLVSCCLAGQVCVWDAQTGDCLTR). The disordered stretch occupies residues 816-903 (GSRRDSCGGG…RHRAGCGRAR (88 aa)). S821, S837, S843, S850, S905, and S934 each carry phosphoserine. The interval 928-957 (PALRPPSPGSPLPQASQEDGAAPEKGSPPL) is disordered. WD repeat units lie at residues 949–999 (APEK…LCCS) and 1002–1039 (EVSS…SLSP). Residue R1048 is modified to Omega-N-methylarginine. WD repeat units lie at residues 1074–1111 (AHQK…CLFT), 1114–1152 (GHSG…RVSH), 1155–1192 (AHRG…KLYS), and 1194–1232 (QQDL…LLQT).

Belongs to the WD repeat SCAP family. Membrane region forms a homotetramer. Component of the SCAP-SREBP complex (composed of SCAP and SREBF1/SREBP1 or SREBF2/SREBP2); interacts with SREBF1/SREBP1 or SREBF2/SREBP2 through its C-terminal cytoplasmic domain. Forms a ternary complex with INSIG1 or INSIG2 through its transmembrane domains at high sterol concentrations. Interacts with PAQR3; the interaction anchors the SCAP-SREBP complex to the Golgi apparatus in low cholesterol conditions. Interacts with the SEC23-SEC24 complex in a SAR1-GTP-dependent manner through an ER export signal in its third cytoplasmic loop. Interacts with RNF139; the interaction inhibits the interaction of SCAP with SEC24B and hampering the ER to Golgi transport of the SCAP-SREBP complex. Interacts with SPRING. Ubiquitinated at Lys-454 and Lys-466. RNF145 triggers ubiquitination of SCAP, likely inhibiting SCAP-SREBP complex transport to the Golgi apparatus and the subsequent processing/maturation of SREBF2/SREBP2.

It is found in the endoplasmic reticulum membrane. The protein resides in the golgi apparatus membrane. The protein localises to the cytoplasmic vesicle. Its subcellular location is the COPII-coated vesicle membrane. In terms of biological role, escort protein required for cholesterol as well as lipid homeostasis. Regulates export of the SCAP-SREBP complex from the endoplasmic reticulum to the Golgi upon low cholesterol, thereby regulating the processing of sterol regulatory element-binding proteins (SREBPs) SREBF1/SREBP1 and SREBF2/SREBP2. At high sterol concentrations, formation of a ternary complex with INSIG (INSIG1 or INSIG2) leads to mask the ER export signal in SCAP, promoting retention of the complex in the endoplasmic reticulum. Low sterol concentrations trigger release of INSIG, a conformational change in the SSD domain of SCAP, unmasking of the ER export signal, promoting recruitment into COPII-coated vesicles and transport of the SCAP-SREBP to the Golgi: in the Golgi, SREBPs are then processed, releasing the transcription factor fragment of SREBPs from the membrane, its import into the nucleus and up-regulation of LDLR, INSIG1 and the mevalonate pathway. Binds cholesterol via its SSD domain. The chain is Sterol regulatory element-binding protein cleavage-activating protein from Cricetulus griseus (Chinese hamster).